The primary structure comprises 117 residues: uncharacterized protein (117 aa).

A coiled-coil region spans residues 5–50 (DKIHNTNEQITALEKKKYQIETTLLEKQRDLLKLETQQNKAKLELL).

This is an uncharacterized protein from Bacillus pumilus (Bacillus mesentericus).